A 210-amino-acid chain; its full sequence is Synaptosomal-associated protein 23 (210 aa).

The residue at position 1 (methionine 1) is an N-acetylmethionine. Serine 5, serine 20, serine 23, and serine 34 each carry phosphoserine. In terms of domain architecture, t-SNARE coiled-coil homology 1 spans 14 to 76; it reads HQVTDESLES…REAEKTLTEL (63 aa). Residues 23–76 adopt a coiled-coil conformation; that stretch reads STRRILGLAIESQDAGIKTITMLDEQGEQLNRIEEGMDQINKDMREAEKTLTEL. S-palmitoyl cysteine attachment occurs at residues cysteine 79, cysteine 80, cysteine 83, cysteine 85, and cysteine 87. A disordered region spans residues 104–136; sequence GDGGDSSPSNVVSKQPSRITNGQPQQTTGAASG. Over residues 109–133 the composition is skewed to polar residues; that stretch reads SSPSNVVSKQPSRITNGQPQQTTGA. 2 positions are modified to phosphoserine: serine 110 and serine 160. In terms of domain architecture, t-SNARE coiled-coil homology 2 spans 145-207; that stretch reads DAREDEMEEN…DIANTRAKKL (63 aa).

It belongs to the SNAP-25 family. As to quaternary structure, homotetramer (via coiled-coil domain), also forms heterotetramers with STX4 and VAMP3. Found in a complex with VAMP8 and STX1A. Found in a complex with VAMP8 and STX4 in pancreas. Interacts simultaneously with SNAPIN and SYN4. Interacts with STX1A. Interacts with STX12. Interacts tightly to multiple syntaxins and synaptobrevins/VAMPs. Interacts with ZDHHC13 (via ANK repeats). Interacts with ZDHHC17 (via ANK repeats).

The protein localises to the cell membrane. Its subcellular location is the synapse. It localises to the synaptosome. It is found in the cytoplasmic vesicle membrane. In terms of biological role, essential component of the high affinity receptor for the general membrane fusion machinery and an important regulator of transport vesicle docking and fusion. In Rattus norvegicus (Rat), this protein is Synaptosomal-associated protein 23 (Snap23).